The sequence spans 156 residues: ATP synthase subunit b', chloroplastic (156 aa).

A helical membrane pass occupies residues 20–42 (NGTLPLMALQFLTLMVLLNTIFY).

Belongs to the ATPase B chain family. As to quaternary structure, F-type ATPases have 2 components, F(1) - the catalytic core - and F(0) - the membrane proton channel. F(1) has five subunits: alpha(3), beta(3), gamma(1), delta(1), epsilon(1). F(0) has four main subunits: a(1), b(1), b'(1) and c(10-14). The alpha and beta chains form an alternating ring which encloses part of the gamma chain. F(1) is attached to F(0) by a central stalk formed by the gamma and epsilon chains, while a peripheral stalk is formed by the delta, b and b' chains.

The protein localises to the plastid. Its subcellular location is the chloroplast thylakoid membrane. Its function is as follows. F(1)F(0) ATP synthase produces ATP from ADP in the presence of a proton or sodium gradient. F-type ATPases consist of two structural domains, F(1) containing the extramembraneous catalytic core and F(0) containing the membrane proton channel, linked together by a central stalk and a peripheral stalk. During catalysis, ATP synthesis in the catalytic domain of F(1) is coupled via a rotary mechanism of the central stalk subunits to proton translocation. In terms of biological role, component of the F(0) channel, it forms part of the peripheral stalk, linking F(1) to F(0). The b'-subunit is a diverged and duplicated form of b found in plants and photosynthetic bacteria. The protein is ATP synthase subunit b', chloroplastic of Pyropia yezoensis (Susabi-nori).